Consider the following 560-residue polypeptide: Oxygen-dependent choline dehydrogenase (560 aa).

6-35 (DYIIVGAGSAGCVLADRLSESGDHSVLLLE) contributes to the FAD binding site. His470 functions as the Proton acceptor in the catalytic mechanism.

Belongs to the GMC oxidoreductase family. FAD is required as a cofactor.

It carries out the reaction choline + A = betaine aldehyde + AH2. It catalyses the reaction betaine aldehyde + NAD(+) + H2O = glycine betaine + NADH + 2 H(+). The protein operates within amine and polyamine biosynthesis; betaine biosynthesis via choline pathway; betaine aldehyde from choline (cytochrome c reductase route): step 1/1. Involved in the biosynthesis of the osmoprotectant glycine betaine. Catalyzes the oxidation of choline to betaine aldehyde and betaine aldehyde to glycine betaine at the same rate. This chain is Oxygen-dependent choline dehydrogenase, found in Vibrio vulnificus (strain YJ016).